An 85-amino-acid polypeptide reads, in one-letter code: Protein Vpu (85 aa).

Residues 1–7 (MHHRDLL) lie on the Extracellular side of the membrane. The chain crosses the membrane as a helical span at residues 8 to 28 (AIIIISALLFINVILWGFILR). Residues 29–85 (KYLEQKEQDRKEREILERLRRIREIRDDSDYESNGEEEQEVMDLVLSHGFDNPMFEP) lie on the Cytoplasmic side of the membrane.

It belongs to the HIV-1 VPU protein family. Homopentamer. Interacts with host CD4 and BRTC; these interactions induce proteasomal degradation of CD4. Interacts with host BST2; this interaction leads to the degradation of host BST2. Interacts with host FBXW11. Interacts with host AP1M1; this interaction plays a role in the mistrafficking and subsequent degradation of host BST2. Interacts with host RANBP2; this interaction allows Vpu to down-regulate host BLM sumoylation. In terms of processing, phosphorylated by host CK2. This phosphorylation is necessary for interaction with human BTRC and degradation of CD4.

Its subcellular location is the host membrane. Ion channel activity is inhibited by hexamethylene amiloride in vitro. In terms of biological role, enhances virion budding by targeting host CD4 and Tetherin/BST2 to proteasome degradation. Degradation of CD4 prevents any unwanted premature interactions between viral Env and its host receptor CD4 in the endoplasmic reticulum. Degradation of antiretroviral protein Tetherin/BST2 is important for virion budding, as BST2 tethers new viral particles to the host cell membrane. Mechanistically, Vpu bridges either CD4 or BST2 to BTRC, a substrate recognition subunit of the Skp1/Cullin/F-box protein E3 ubiquitin ligase, induces their ubiquitination and subsequent proteasomal degradation. The alteration of the E3 ligase specificity by Vpu seems to promote the degradation of host IKBKB, leading to NF-kappa-B down-regulation and subsequent apoptosis. Acts as a viroporin that forms an oligomeric ion channel in membranes. Modulates the host DNA repair mechanisms to promote degradation of nuclear viral cDNA in cells that are already productively infected in order to suppress immune sensing and proviral hyper-integration (superinfection). Manipulates PML-NBs and modulates SUMOylation of host BLM protein thereby enhancing its DNA-end processing activity toward viral unintegrated linear DNA. Also inhibits RAD52-mediated homologous repair of viral cDNA, preventing the generation of dead-end circular forms of single copies of the long terminal repeat and permitting sustained nucleolytic attack. This chain is Protein Vpu, found in Human immunodeficiency virus type 1 group O (isolate ANT70) (HIV-1).